The following is a 431-amino-acid chain: Adenylosuccinate synthetase (431 aa).

GTP is bound by residues 12–18 (GDEGKGK) and 40–42 (GHT). The Proton acceptor role is filled by Asp13. Mg(2+) is bound by residues Asp13 and Gly40. Residues 13 to 16 (DEGK), 38 to 41 (NAGH), Thr130, Arg144, Gln225, Thr240, and Arg304 contribute to the IMP site. The active-site Proton donor is His41. 300–306 (STTGRPR) provides a ligand contact to substrate. Residues Arg306, 332-334 (KMD), and 414-416 (SIG) contribute to the GTP site.

Belongs to the adenylosuccinate synthetase family. In terms of assembly, homodimer. The cofactor is Mg(2+).

The protein localises to the cytoplasm. It carries out the reaction IMP + L-aspartate + GTP = N(6)-(1,2-dicarboxyethyl)-AMP + GDP + phosphate + 2 H(+). The protein operates within purine metabolism; AMP biosynthesis via de novo pathway; AMP from IMP: step 1/2. Its function is as follows. Plays an important role in the de novo pathway of purine nucleotide biosynthesis. Catalyzes the first committed step in the biosynthesis of AMP from IMP. The polypeptide is Adenylosuccinate synthetase (Syntrophotalea carbinolica (strain DSM 2380 / NBRC 103641 / GraBd1) (Pelobacter carbinolicus)).